The sequence spans 234 residues: Sugar fermentation stimulation protein homolog (234 aa).

The protein belongs to the SfsA family.

The polypeptide is Sugar fermentation stimulation protein homolog (Photobacterium profundum (strain SS9)).